Consider the following 373-residue polypeptide: Probable G-protein coupled receptor 45 (373 aa).

Residues 1–38 (MACNSTPMGTYEHLLLNVSNTLDPGDTPLSAPLRISLA) lie on the Extracellular side of the membrane. The N-linked (GlcNAc...) asparagine glycan is linked to N17. Residues 39-59 (IMMLLMIVVGFLGNTVVCIIV) form a helical membrane-spanning segment. Residues 60-75 (YQRPAMRSAINLLLAT) are Cytoplasmic-facing. Residues 76–96 (LAFSDIMLSLCCMPFTAITLI) form a helical membrane-spanning segment. The Extracellular portion of the chain corresponds to 97–109 (TVRWHFGDHFCRL). The chain crosses the membrane as a helical span at residues 110–130 (SATLYWFFVLEGVAILLIISV). Residues 131-149 (DRFLIIVQRQDKLNPRRAK) are Cytoplasmic-facing. Residues 150 to 170 (MIIAASWVLSFCISAPSFTGW) traverse the membrane as a helical segment. Residues 171–198 (TFMEVPARAPQCVLGYTEFPAERAYVVT) lie on the Extracellular side of the membrane. Residues 199–219 (LVVAVFFAPFGVMLCSYLCIL) traverse the membrane as a helical segment. Residues 220 to 269 (NTVRKNAVRVHNQSDSLDLRQLTGAGLRRLRRQQQQASLDLSFKTKAFTT) are Cytoplasmic-facing. Residues 270–290 (ILILFVGFSLCWLPHSVYSLL) form a helical membrane-spanning segment. Residues 291 to 306 (SAFSRRFYYSASFYTT) lie on the Extracellular side of the membrane. A helical transmembrane segment spans residues 307-327 (STCVLWLSYLKSVFNPIVYCW). The Cytoplasmic segment spans residues 328 to 373 (RIKKFREACIELLPHTFQILPKVPERIQRKIQPSTIYVCNENQSAV).

This sequence belongs to the G-protein coupled receptor 1 family. Brain specific.

The protein localises to the cell membrane. Orphan receptor. May play a role in brain function. The polypeptide is Probable G-protein coupled receptor 45 (Gpr45) (Mus musculus (Mouse)).